A 375-amino-acid polypeptide reads, in one-letter code: MQCALYDAGRCRSCQWITQPIPEQLSAKTADLKNLLADFPVEEWCAPVSGPEQGFRNKAKMVVSGSVEKPLLGMLHRDGTPEDLCDCPLYPASFAPVFAALKPFIARAGLTPYNVARKRGELKYILLTESQSDGGMMLRFVLRSDTKLAQLRKALPWLQEQLPQLKVITVNIQPVHMAIMEGETEIYLTEQQALAERFNDVPLWIRPQSFFQTNPAVASQLYATARDWVRQLPVKHMWDLFCGVGGFGLHCATPDMQLTGIEIAPEAIACAKQSAAELGLTRLQFQALDSTQFASAQGEVPELVLVNPPRRGIGKPLCDYLSTMAPRFIIYSSCNAQTMAKDIRELPGYRIERVQLFDMFPHTAHYEVLTLLVKQ.

4 residues coordinate [4Fe-4S] cluster: C3, C11, C14, and C87. 4 residues coordinate S-adenosyl-L-methionine: Q212, F241, E262, and N307. Residue C334 is the Nucleophile of the active site.

The protein belongs to the class I-like SAM-binding methyltransferase superfamily. RNA M5U methyltransferase family. RlmC subfamily.

It carries out the reaction uridine(747) in 23S rRNA + S-adenosyl-L-methionine = 5-methyluridine(747) in 23S rRNA + S-adenosyl-L-homocysteine + H(+). Functionally, catalyzes the formation of 5-methyl-uridine at position 747 (m5U747) in 23S rRNA. In Escherichia coli O127:H6 (strain E2348/69 / EPEC), this protein is 23S rRNA (uracil(747)-C(5))-methyltransferase RlmC.